Consider the following 451-residue polypeptide: NADH-quinone oxidoreductase subunit H (451 aa).

9 helical membrane passes run 30-50 (LIIV…LFMI), 98-118 (AVFI…FAVI), 138-158 (LPVA…GIVL), 176-196 (AAQV…VFLY), 213-233 (WGIL…VGET), 262-282 (LFYL…TTLF), 302-322 (WWPV…FIWL), 336-356 (QFGW…EAAI), and 368-388 (VIPF…ADLV).

It belongs to the complex I subunit 1 family. In terms of assembly, NDH-1 is composed of 14 different subunits. Subunits NuoA, H, J, K, L, M, N constitute the membrane sector of the complex.

It localises to the cell membrane. The enzyme catalyses a quinone + NADH + 5 H(+)(in) = a quinol + NAD(+) + 4 H(+)(out). Its function is as follows. NDH-1 shuttles electrons from NADH, via FMN and iron-sulfur (Fe-S) centers, to quinones in the respiratory chain. The immediate electron acceptor for the enzyme in this species is believed to be ubiquinone. Couples the redox reaction to proton translocation (for every two electrons transferred, four hydrogen ions are translocated across the cytoplasmic membrane), and thus conserves the redox energy in a proton gradient. This subunit may bind ubiquinone. This Acidothermus cellulolyticus (strain ATCC 43068 / DSM 8971 / 11B) protein is NADH-quinone oxidoreductase subunit H.